A 394-amino-acid polypeptide reads, in one-letter code: S-adenosylmethionine synthase 2 (394 aa).

Residue Glu11 participates in Mg(2+) binding. His17 lines the ATP pocket. Glu45 is a binding site for K(+). Residues Glu58 and Gln101 each contribute to the L-methionine site. ATP is bound by residues 169-171 (DGK), 237-240 (SGRF), Asp248, 254-255 (RK), Ala271, Lys275, and Lys279. Asp248 serves as a coordination point for L-methionine. Lys279 serves as a coordination point for L-methionine.

This sequence belongs to the AdoMet synthase family. In terms of assembly, homotetramer. Requires Mn(2+) as cofactor. The cofactor is Mg(2+). Co(2+) is required as a cofactor. K(+) serves as cofactor.

It localises to the cytoplasm. The catalysed reaction is L-methionine + ATP + H2O = S-adenosyl-L-methionine + phosphate + diphosphate. It functions in the pathway amino-acid biosynthesis; S-adenosyl-L-methionine biosynthesis; S-adenosyl-L-methionine from L-methionine: step 1/1. In terms of biological role, catalyzes the formation of S-adenosylmethionine from methionine and ATP. The reaction comprises two steps that are both catalyzed by the same enzyme: formation of S-adenosylmethionine (AdoMet) and triphosphate, and subsequent hydrolysis of the triphosphate. This is S-adenosylmethionine synthase 2 (SAM2) from Hordeum vulgare (Barley).